The sequence spans 283 residues: Bifunctional protein FolD (283 aa).

NADP(+) is bound by residues 157-159 (GNG) and isoleucine 224.

Belongs to the tetrahydrofolate dehydrogenase/cyclohydrolase family. As to quaternary structure, homodimer.

The catalysed reaction is (6R)-5,10-methylene-5,6,7,8-tetrahydrofolate + NADP(+) = (6R)-5,10-methenyltetrahydrofolate + NADPH. It carries out the reaction (6R)-5,10-methenyltetrahydrofolate + H2O = (6R)-10-formyltetrahydrofolate + H(+). It functions in the pathway one-carbon metabolism; tetrahydrofolate interconversion. In terms of biological role, catalyzes the oxidation of 5,10-methylenetetrahydrofolate to 5,10-methenyltetrahydrofolate and then the hydrolysis of 5,10-methenyltetrahydrofolate to 10-formyltetrahydrofolate. This chain is Bifunctional protein FolD, found in Mycoplasmoides gallisepticum (strain R(low / passage 15 / clone 2)) (Mycoplasma gallisepticum).